We begin with the raw amino-acid sequence, 98 residues long: Alpha-elicitin hibernalin (98 aa).

3 cysteine pairs are disulfide-bonded: Cys3–Cys71, Cys27–Cys56, and Cys51–Cys95.

It localises to the secreted. In terms of biological role, induces local and distal defense responses (incompatible hypersensitive reaction) in plants from the solanaceae and cruciferae families. Elicits leaf necrosis and causes the accumulation of pathogenesis-related proteins. Might interact with the lipidic molecules of the plasma membrane. The protein is Alpha-elicitin hibernalin of Phytophthora hibernalis.